Here is a 685-residue protein sequence, read N- to C-terminus: Sodium-dependent phosphate transporter 1 (685 aa).

The next 6 helical transmembrane spans lie at 25 to 45 (FLWM…SVGA), 66 to 86 (ACIL…AKVS), 106 to 126 (LMAG…AASF), 162 to 182 (IVLS…LLFY), 201 to 221 (ALPI…MYSG), and 234 to 254 (GIIL…WFFV). Positions 482 to 492 (VEAEEQEEGSI) are enriched in acidic residues. Positions 482-513 (VEAEEQEEGSIEDVATDRKSSSSSLEERHDQD) are disordered. Residues 496–513 (ATDRKSSSSSLEERHDQD) show a composition bias toward basic and acidic residues. A run of 4 helical transmembrane segments spans residues 517-537 (VSLL…FAHG), 565-585 (ATPI…LWVW), 606-626 (FSIE…GLPI), and 656-676 (IFLA…AIMA).

Belongs to the inorganic phosphate transporter (PiT) (TC 2.A.20) family.

It localises to the cell membrane. The enzyme catalyses 2 Na(+)(out) + phosphate(out) = 2 Na(+)(in) + phosphate(in). Functionally, sodium-phosphate symporter which preferentially transports the monovalent form of phosphate with a stoichiometry of two sodium ions per phosphate ion. In Xenopus tropicalis (Western clawed frog), this protein is Sodium-dependent phosphate transporter 1 (slc20a1).